The primary structure comprises 266 residues: Putative pyruvate, phosphate dikinase regulatory protein (266 aa).

149-156 (GVSRTSKT) is an ADP binding site.

Belongs to the pyruvate, phosphate/water dikinase regulatory protein family. PDRP subfamily.

The catalysed reaction is N(tele)-phospho-L-histidyl/L-threonyl-[pyruvate, phosphate dikinase] + ADP = N(tele)-phospho-L-histidyl/O-phospho-L-threonyl-[pyruvate, phosphate dikinase] + AMP + H(+). It carries out the reaction N(tele)-phospho-L-histidyl/O-phospho-L-threonyl-[pyruvate, phosphate dikinase] + phosphate + H(+) = N(tele)-phospho-L-histidyl/L-threonyl-[pyruvate, phosphate dikinase] + diphosphate. Functionally, bifunctional serine/threonine kinase and phosphorylase involved in the regulation of the pyruvate, phosphate dikinase (PPDK) by catalyzing its phosphorylation/dephosphorylation. This chain is Putative pyruvate, phosphate dikinase regulatory protein, found in Geobacillus thermodenitrificans (strain NG80-2).